Here is a 1703-residue protein sequence, read N- to C-terminus: Mediator of RNA polymerase II transcription subunit 14 (1703 aa).

A compositionally biased stretch (polar residues) spans 755–766; it reads LSQTADLATSSA. The interval 755–781 is disordered; sequence LSQTADLATSSAGPLLRKDQKPRKRSA.

The protein belongs to the Mediator complex subunit 14 family. In terms of assembly, component of the Mediator complex. Interacts with CDKE-1, HDA19 and LUG. Interacts with PTAC12/HMR/PAP5 and PIF4. In terms of tissue distribution, expressed in roots, stems, developing embryos, young leaf primordia, shoot apical meristems, inflorescence meristems, tapetum in anthers, ovules and floral organ primordia, but not in mature organs.

Its subcellular location is the nucleus. In terms of biological role, component of the Mediator complex, a coactivator involved in the regulated transcription of nearly all RNA polymerase II-dependent genes. Mediator functions as a bridge to convey information from gene-specific regulatory proteins to the basal RNA polymerase II transcription machinery. The Mediator complex, having a compact conformation in its free form, is recruited to promoters by direct interactions with regulatory proteins and serves for the assembly of a functional pre-initiation complex with RNA polymerase II and the general transcription factors. Binds to G-box (5'-CACGTG-3')-containing regions of target genes promoters (e.g. IAA29 and IAA19). Involved in defining the duration of cell proliferation. Element of a PIF4/HMR/MED14-dependent thermoresponsive process; required for thermomorphogenetic hypocotyl growth in response to daytime warm temperature elicitation by associating to the promoters of thermoresponsive growth-relevant genes (e.g. mainly involved in biosynthesis and signaling of the phytohormone auxin); this also process implies PIF4 and its transcriptional coactivator PTAC12/HMR/PAP5 to promote the expression of target genes. The protein is Mediator of RNA polymerase II transcription subunit 14 of Arabidopsis thaliana (Mouse-ear cress).